The following is a 360-amino-acid chain: Peptide chain release factor 1 (360 aa).

Gln237 carries the post-translational modification N5-methylglutamine.

The protein belongs to the prokaryotic/mitochondrial release factor family. In terms of processing, methylated by PrmC. Methylation increases the termination efficiency of RF1.

The protein localises to the cytoplasm. Peptide chain release factor 1 directs the termination of translation in response to the peptide chain termination codons UAG and UAA. This is Peptide chain release factor 1 from Pseudomonas entomophila (strain L48).